Here is a 205-residue protein sequence, read N- to C-terminus: MIGIVIPIKRLHLAKSRLIDLLDPADRQQLVVTMVRHVITTARQAVSYLSIPARIWLVSPEPTLATDSEGIEWLPDNQEELNAALTEARQRIQAAGVQIMMVLAGDLPFVTVRDLILLSEALTDNDVVVAPDQHGQGTNALGLHLPSQLPFGFGPDSAGYHLRTAARLGLRASLISTPTLAFDLDDGERLQQYYRCIASCDNFAR.

Phosphoenolpyruvate-binding residues include threonine 138, glycine 154, and serine 157.

This sequence belongs to the CofC family.

It catalyses the reaction phosphoenolpyruvate + GTP + H(+) = enolpyruvoyl-2-diphospho-5'-guanosine + diphosphate. It participates in cofactor biosynthesis; coenzyme F420 biosynthesis. Guanylyltransferase that catalyzes the activation of phosphoenolpyruvate (PEP) as enolpyruvoyl-2-diphospho-5'-guanosine, via the condensation of PEP with GTP. It is involved in the biosynthesis of coenzyme F420, a hydride carrier cofactor. This is Phosphoenolpyruvate guanylyltransferase from Chloroflexus aurantiacus (strain ATCC 29364 / DSM 637 / Y-400-fl).